We begin with the raw amino-acid sequence, 383 residues long: Lipid-A-disaccharide synthase (383 aa).

Belongs to the LpxB family.

The catalysed reaction is a lipid X + a UDP-2-N,3-O-bis[(3R)-3-hydroxyacyl]-alpha-D-glucosamine = a lipid A disaccharide + UDP + H(+). The protein operates within bacterial outer membrane biogenesis; LPS lipid A biosynthesis. Condensation of UDP-2,3-diacylglucosamine and 2,3-diacylglucosamine-1-phosphate to form lipid A disaccharide, a precursor of lipid A, a phosphorylated glycolipid that anchors the lipopolysaccharide to the outer membrane of the cell. The polypeptide is Lipid-A-disaccharide synthase (Anaeromyxobacter dehalogenans (strain 2CP-1 / ATCC BAA-258)).